The following is a 434-amino-acid chain: Protein trichome birefringence-like 3 (434 aa).

The chain crosses the membrane as a helical; Signal-anchor for type II membrane protein span at residues 15 to 35; sequence IPLSIIVLVLCGFMFFILLYT. A GDS motif motif is present at residues 166–168; that stretch reads GDS. Residues 413–427 carry the DCXHWCLPGXXDXWN motif motif; that stretch reads DCIHWCLPGLPDTWN.

The protein belongs to the PC-esterase family. TBL subfamily.

It localises to the golgi apparatus membrane. Functionally, involved in secondary cell wall cellulose deposition. Required for normal stem development. May act as a bridging protein that binds pectin and other cell wall polysaccharides. Probably involved in maintaining esterification of pectins. May be involved in the specific O-acetylation of cell wall polymers. The sequence is that of Protein trichome birefringence-like 3 (TBL3) from Arabidopsis thaliana (Mouse-ear cress).